Reading from the N-terminus, the 848-residue chain is Protein SEY1 (848 aa).

Residues 1 to 733 (MNGNFAAVGS…KRGALGGMTQ (733 aa)) lie on the Cytoplasmic side of the membrane. Residues 47-277 (GFNYHLISVF…FVGGVFLPEY (231 aa)) form the GB1/RHD3-type G domain. 57–64 (GSQSTGKS) is a GTP binding site. Residues 734–754 (VPLYFWIALFAFGWNEIWMVI) form a helical membrane-spanning segment. At 755–757 (RNP) the chain is on the lumenal side. A helical transmembrane segment spans residues 758-778 (FLFILLLLSAGGTYVAYNLSL). Residues 779–848 (LGPMMQMTNA…KKKDYDDDGI (70 aa)) are Cytoplasmic-facing. Positions 815 to 848 (LAMPASSKSSGGEQVRMDTLDSKGKKKDYDDDGI) are disordered. Over residues 829 to 848 (VRMDTLDSKGKKKDYDDDGI) the composition is skewed to basic and acidic residues.

It belongs to the TRAFAC class dynamin-like GTPase superfamily. GB1/RHD3 GTPase family. RHD3 subfamily.

Its subcellular location is the endoplasmic reticulum membrane. Cooperates with the reticulon proteins and tubule-shaping DP1 family proteins to generate and maintain the structure of the tubular endoplasmic reticulum network. Has GTPase activity, which is required for its function in ER organization. This chain is Protein SEY1, found in Pyricularia oryzae (strain 70-15 / ATCC MYA-4617 / FGSC 8958) (Rice blast fungus).